The following is a 262-amino-acid chain: Nurim (262 aa).

Topologically, residues 1 to 4 are nuclear; sequence MAPA. The chain crosses the membrane as a helical span at residues 5–28; the sequence is LLLIPAALASFILAFGTGVEFVRF. The Perinuclear space portion of the chain corresponds to 29-58; sequence TSLRPLLGRISESGSPDARQGWLAALQDQS. The helical transmembrane segment at 59–80 threads the bilayer; it reads ILVPLVWDLGLLLLFVGQHSLM. Over 81-97 the chain is Nuclear; sequence ATETVKEWMSRYFGVLQ. Residues 98–114 form a helical membrane-spanning segment; sequence RSLYVACTALALQLVMR. The Perinuclear space segment spans residues 115–133; sequence YWEPVPRGPVLWETRTEPW. The helical transmembrane segment at 134–164 threads the bilayer; sequence ATWVPLLCFVLHVISWLLIFSILLVFDYAEL. Over 165 to 191 the chain is Nuclear; it reads MGLKQVYYHVLGLGEPLALKSPRALRL. Residues 192–210 traverse the membrane as a helical segment; that stretch reads FSHLRHPVCVELLTVLWVV. Residues 211-216 lie on the Perinuclear space side of the membrane; it reads PTLGTD. A helical membrane pass occupies residues 217-234; sequence RLLLALLLTLYLGLAHGL. Over 235 to 262 the chain is Nuclear; it reads DQHDLRYLRAQLQRKLHLLSRPQDGEAE.

It belongs to the nurim family.

The protein resides in the nucleus inner membrane. This chain is Nurim (NRM), found in Bos taurus (Bovine).